Here is a 168-residue protein sequence, read N- to C-terminus: Shikimate kinase (168 aa).

12–17 (GAGKST) is a binding site for ATP. S16 lines the Mg(2+) pocket. Substrate-binding residues include D34, R58, and G80. R117 serves as a coordination point for ATP. R136 is a substrate binding site. R153 contacts ATP.

It belongs to the shikimate kinase family. As to quaternary structure, monomer. Mg(2+) serves as cofactor.

Its subcellular location is the cytoplasm. The catalysed reaction is shikimate + ATP = 3-phosphoshikimate + ADP + H(+). It functions in the pathway metabolic intermediate biosynthesis; chorismate biosynthesis; chorismate from D-erythrose 4-phosphate and phosphoenolpyruvate: step 5/7. Functionally, catalyzes the specific phosphorylation of the 3-hydroxyl group of shikimic acid using ATP as a cosubstrate. This chain is Shikimate kinase, found in Rhodococcus jostii (strain RHA1).